We begin with the raw amino-acid sequence, 234 residues long: uncharacterized protein (234 aa).

Residues 199–234 (DNQNEPLENYSDDNNFSNFDETEHVDDSEMNDDNFI) are disordered.

This is an uncharacterized protein from Buchnera aphidicola subsp. Schizaphis graminum (strain Sg).